The following is a 699-amino-acid chain: Polyribonucleotide nucleotidyltransferase (699 aa).

The Mg(2+) site is built by Asp485 and Asp491. Residues 552–611 form the KH domain; sequence PRITTIKINPEKIRDVIGKGGAVIRALTEETGTTIELEDDGTVKIASSNGEATKEAIRRI. The 69-residue stretch at 621–689 folds into the S1 motif domain; that stretch reads GRIYNGKVIR…RQGRVRLSIK (69 aa).

Belongs to the polyribonucleotide nucleotidyltransferase family. As to quaternary structure, component of the RNA degradosome, which is a multiprotein complex involved in RNA processing and mRNA degradation. It depends on Mg(2+) as a cofactor.

The protein resides in the cytoplasm. It catalyses the reaction RNA(n+1) + phosphate = RNA(n) + a ribonucleoside 5'-diphosphate. Involved in mRNA degradation. Catalyzes the phosphorolysis of single-stranded polyribonucleotides processively in the 3'- to 5'-direction. This chain is Polyribonucleotide nucleotidyltransferase, found in Shewanella oneidensis (strain ATCC 700550 / JCM 31522 / CIP 106686 / LMG 19005 / NCIMB 14063 / MR-1).